The primary structure comprises 249 residues: Meiotic drive suppressor wtf25 (249 aa).

The disordered stretch occupies residues 1–40 (MKNNYTSLKSPLDEEDELKTDHEIDLEKGPLPEYDSEEEG). Residues 19–30 (KTDHEIDLEKGP) are compositionally biased toward basic and acidic residues. 4 helical membrane passes run 73–93 (LLII…PAFC), 110–130 (WTLF…LTYF), 151–170 (NMIF…LKAE), and 187–207 (SASA…AETV).

The protein belongs to the WTF family. Homomer. Interacts with other proteins that exhibit high sequence similarity.

Its subcellular location is the spore membrane. It localises to the vacuole membrane. In terms of biological role, acts as a suppressor component of the dual wtf meiotic drive system, and can suppress but not confer meiotic drive by compatible poisons. Wtf meiotic drive systems promote unequal transmission of alleles from the parental zygote to progeny spores by encoding a poison and an antidote from the same locus; the poison is trans-acting and forms toxic aggregates in all spores within an ascus, wherease the antidote is spore-specific and targets aggregates for degradation by the vacuole. Meiotic drive by wtf systems therefore lead to poisoning of all progeny that do not inherit the dual poison/antidote allele, or express a compatible antidote. This Schizosaccharomyces pombe (strain 972 / ATCC 24843) (Fission yeast) protein is Meiotic drive suppressor wtf25.